We begin with the raw amino-acid sequence, 215 residues long: Ribose-5-phosphate isomerase A (215 aa).

Substrate-binding positions include 26 to 29 (TGST), 79 to 82 (DGAD), and 92 to 95 (KGGG). The active-site Proton acceptor is glutamate 101. Lysine 119 contacts substrate.

Belongs to the ribose 5-phosphate isomerase family. As to quaternary structure, homodimer.

The catalysed reaction is aldehydo-D-ribose 5-phosphate = D-ribulose 5-phosphate. It participates in carbohydrate degradation; pentose phosphate pathway; D-ribose 5-phosphate from D-ribulose 5-phosphate (non-oxidative stage): step 1/1. Functionally, catalyzes the reversible conversion of ribose-5-phosphate to ribulose 5-phosphate. This is Ribose-5-phosphate isomerase A from Xylella fastidiosa (strain Temecula1 / ATCC 700964).